We begin with the raw amino-acid sequence, 100 residues long: NADH-quinone oxidoreductase subunit K (100 aa).

Helical transmembrane passes span 4–24 (TSYY…GVLL), 29–49 (IVIF…LVAF), and 61–81 (IVFF…ALLV).

It belongs to the complex I subunit 4L family. As to quaternary structure, NDH-1 is composed of 14 different subunits. Subunits NuoA, H, J, K, L, M, N constitute the membrane sector of the complex.

It is found in the cell membrane. It carries out the reaction a quinone + NADH + 5 H(+)(in) = a quinol + NAD(+) + 4 H(+)(out). Functionally, NDH-1 shuttles electrons from NADH, via FMN and iron-sulfur (Fe-S) centers, to quinones in the respiratory chain. The immediate electron acceptor for the enzyme in this species is believed to be ubiquinone. Couples the redox reaction to proton translocation (for every two electrons transferred, four hydrogen ions are translocated across the cytoplasmic membrane), and thus conserves the redox energy in a proton gradient. This chain is NADH-quinone oxidoreductase subunit K, found in Chloroflexus aggregans (strain MD-66 / DSM 9485).